Here is a 436-residue protein sequence, read N- to C-terminus: Methylenetetrahydrofolate--tRNA-(uracil-5-)-methyltransferase TrmFO (436 aa).

10 to 15 contributes to the FAD binding site; the sequence is GAGLAG.

Belongs to the MnmG family. TrmFO subfamily. Requires FAD as cofactor.

It is found in the cytoplasm. It carries out the reaction uridine(54) in tRNA + (6R)-5,10-methylene-5,6,7,8-tetrahydrofolate + NADH + H(+) = 5-methyluridine(54) in tRNA + (6S)-5,6,7,8-tetrahydrofolate + NAD(+). The catalysed reaction is uridine(54) in tRNA + (6R)-5,10-methylene-5,6,7,8-tetrahydrofolate + NADPH + H(+) = 5-methyluridine(54) in tRNA + (6S)-5,6,7,8-tetrahydrofolate + NADP(+). Its function is as follows. Catalyzes the folate-dependent formation of 5-methyl-uridine at position 54 (M-5-U54) in all tRNAs. The polypeptide is Methylenetetrahydrofolate--tRNA-(uracil-5-)-methyltransferase TrmFO (Exiguobacterium sp. (strain ATCC BAA-1283 / AT1b)).